The sequence spans 202 residues: Large ribosomal subunit protein bL25 (202 aa).

Residues 182 to 202 are disordered; sequence QTAPEEEEGTAAETTEPELAE. Positions 185 to 202 are enriched in acidic residues; the sequence is PEEEEGTAAETTEPELAE.

The protein belongs to the bacterial ribosomal protein bL25 family. CTC subfamily. Part of the 50S ribosomal subunit; part of the 5S rRNA/L5/L18/L25 subcomplex. Contacts the 5S rRNA. Binds to the 5S rRNA independently of L5 and L18.

Its function is as follows. This is one of the proteins that binds to the 5S RNA in the ribosome where it forms part of the central protuberance. The chain is Large ribosomal subunit protein bL25 from Enterococcus faecalis (strain ATCC 700802 / V583).